A 657-amino-acid polypeptide reads, in one-letter code: MTDRIVPATLVFREDGTVVSPLYGDIYHSAAGALAQADHVFIRGNGLPERWRHERAFTIIETGFGTGCNFLATWAAWRADPSHCERLHFVSVEKHPFAREDLRRAAAHIVAYTTITPIAPLVDELANAWPALTPGVHRLEFDDGRVTLTLVFGDALDVLPNLALRAHAFYLDGFAPSKNADLWSPAIFKSLAKLADERATFATYTSSGAVKRALDEAGFAYRKVDGFAGKRAMLVGEFAPRWRVRRHEPPRAFSTDIRDAIVIGAGLAGCAVVERLAARGWHVTLIERRERIASEASGNPAGVFHPMIARDDNLAARLSRAGFLHALNRWRALERAGHAFSRSTHGLVQLATSDNEFERMRESIDALGVPAELASALSRDDARALLRTDVAHGGWLFAQGGSISPAALAAAQCAAAGDRLSRIVGVEIARLERGGDGRWRALDASGATIAQASVVVVANAADAARIAGLRHAPTQRVRGQLTLLPPGSAPAVPLPVIGDGYVVPLANGVTLTGATYEPDDTDATPREAGHRENLERLERLLPAFSANALDAGALAGRVGFRCVASDRLPLVGELGDEAAAAREAAALTGARLRDVPRATGLYGAFGYGSRGLVWAALGAELIAAQIDGEPWPLERELAEAIDPARFLVRALRHGRVA.

The tract at residues 1–239 (MTDRIVPATL…KRAMLVGEFA (239 aa)) is tRNA (mnm(5)s(2)U34)-methyltransferase. The segment at 263–657 (IGAGLAGCAV…VRALRHGRVA (395 aa)) is FAD-dependent cmnm(5)s(2)U34 oxidoreductase.

The protein in the N-terminal section; belongs to the methyltransferase superfamily. tRNA (mnm(5)s(2)U34)-methyltransferase family. It in the C-terminal section; belongs to the DAO family. Requires FAD as cofactor.

It is found in the cytoplasm. The catalysed reaction is 5-aminomethyl-2-thiouridine(34) in tRNA + S-adenosyl-L-methionine = 5-methylaminomethyl-2-thiouridine(34) in tRNA + S-adenosyl-L-homocysteine + H(+). Its function is as follows. Catalyzes the last two steps in the biosynthesis of 5-methylaminomethyl-2-thiouridine (mnm(5)s(2)U) at the wobble position (U34) in tRNA. Catalyzes the FAD-dependent demodification of cmnm(5)s(2)U34 to nm(5)s(2)U34, followed by the transfer of a methyl group from S-adenosyl-L-methionine to nm(5)s(2)U34, to form mnm(5)s(2)U34. The polypeptide is tRNA 5-methylaminomethyl-2-thiouridine biosynthesis bifunctional protein MnmC (Burkholderia pseudomallei (strain 668)).